Reading from the N-terminus, the 393-residue chain is Mitogen-activated protein kinase SIPK (393 aa).

Positions 1–11 are enriched in polar residues; that stretch reads MDGSGQQTDTM. Positions 1–31 are disordered; sequence MDGSGQQTDTMMSDAGAEQPPPAPQPVAGMD. A Protein kinase domain is found at 60 to 345; that stretch reads KPPILPIGKG…VEGALAHPYL (286 aa). Residues 66–74 and Lys-89 each bind ATP; that span reads IGKGAYGIV. The active-site Proton acceptor is Asp-186. Residues 218 to 220 carry the TXY motif; it reads TEY.

This sequence belongs to the protein kinase superfamily. CMGC Ser/Thr protein kinase family. MAP kinase subfamily. As to quaternary structure, interacts with SIPKK.

It catalyses the reaction L-tyrosyl-[protein] + ATP = O-phospho-L-tyrosyl-[protein] + ADP + H(+). The enzyme catalyses L-seryl-[protein] + ATP = O-phospho-L-seryl-[protein] + ADP + H(+). The catalysed reaction is L-threonyl-[protein] + ATP = O-phospho-L-threonyl-[protein] + ADP + H(+). Its activity is regulated as follows. Activated by threonine and tyrosine phosphorylation. Functionally, phosphorylates myelin basic protein (MBP) in vitro. May be involved in disease resistance. The polypeptide is Mitogen-activated protein kinase SIPK (Nicotiana tabacum (Common tobacco)).